Here is a 314-residue protein sequence, read N- to C-terminus: Aryldialkylphosphatase (314 aa).

Residues H22, H24, and K137 each coordinate Fe cation. Co(2+) contacts are provided by K137, H170, and H199. K137 carries the post-translational modification N6-carboxylysine. D256 is a Fe cation binding site.

Belongs to the metallo-dependent hydrolases superfamily. Phosphotriesterase family. As to quaternary structure, homodimer. Co(2+) is required as a cofactor. It depends on Fe cation as a cofactor.

The catalysed reaction is An aryl dialkyl phosphate + H2O = dialkyl phosphate + an aryl alcohol.. With respect to regulation, inactivated by EDTA and o-phenanthroline. In terms of biological role, has a low paraoxonase activity. Also active, but with a lower activity, against other organo-phosphorus insecticides such as Dursban, Coumaphos, pNP-butanoate or parathion. This Saccharolobus solfataricus (strain ATCC 35092 / DSM 1617 / JCM 11322 / P2) (Sulfolobus solfataricus) protein is Aryldialkylphosphatase (php).